The sequence spans 220 residues: Charged multivesicular body protein 3 (220 aa).

Gly-2 is lipidated: N-myristoyl glycine. A coiled-coil region spans residues 22–54 (KIRKEMRVIDRQIRDIQREQEKVKRSIKESAKK). The interval 168 to 169 (IL) is important for autoinhibitory function. The segment at 181–220 (PSKVTDALPEPEITGAMAASDEEEEEDLEAMHSRLAALRS) is disordered. An MIT-interacting motif motif is present at residues 201 to 209 (DEEEEEDLE). 2 interaction with STAMBP regions span residues 203-207 (EEEED) and 219-220 (RS).

It belongs to the SNF7 family. As to quaternary structure, probable core component of the endosomal sorting required for transport complex III (ESCRT-III). ESCRT-III components are thought to multimerize to form a flat lattice on the perimeter membrane of the endosome. Several assembly forms of ESCRT-III may exist that interact and act sequentially.

The protein resides in the cytoplasm. It localises to the cytosol. Its subcellular location is the membrane. The protein localises to the endosome. It is found in the late endosome membrane. Its function is as follows. Probable core component of the endosomal sorting required for transport complex III (ESCRT-III) which is involved in multivesicular bodies (MVBs) formation and sorting of endosomal cargo proteins into MVBs. MVBs contain intraluminal vesicles (ILVs) that are generated by invagination and scission from the limiting membrane of the endosome and mostly are delivered to lysosomes enabling degradation of membrane proteins, such as stimulated growth factor receptors, lysosomal enzymes and lipids. Involved in late stages of cytokinesis. Plays a role in endosomal sorting/trafficking of EGF receptor. In Xenopus laevis (African clawed frog), this protein is Charged multivesicular body protein 3 (chmp3).